Consider the following 340-residue polypeptide: Biotin synthase (340 aa).

The region spanning Ser53–Arg280 is the Radical SAM core domain. The [4Fe-4S] cluster site is built by Cys68, Cys72, and Cys75. Cys112, Cys143, Cys203, and Arg275 together coordinate [2Fe-2S] cluster.

This sequence belongs to the radical SAM superfamily. Biotin synthase family. As to quaternary structure, homodimer. It depends on [4Fe-4S] cluster as a cofactor. Requires [2Fe-2S] cluster as cofactor.

The catalysed reaction is (4R,5S)-dethiobiotin + (sulfur carrier)-SH + 2 reduced [2Fe-2S]-[ferredoxin] + 2 S-adenosyl-L-methionine = (sulfur carrier)-H + biotin + 2 5'-deoxyadenosine + 2 L-methionine + 2 oxidized [2Fe-2S]-[ferredoxin]. It functions in the pathway cofactor biosynthesis; biotin biosynthesis; biotin from 7,8-diaminononanoate: step 2/2. Functionally, catalyzes the conversion of dethiobiotin (DTB) to biotin by the insertion of a sulfur atom into dethiobiotin via a radical-based mechanism. The protein is Biotin synthase of Bordetella petrii (strain ATCC BAA-461 / DSM 12804 / CCUG 43448).